The chain runs to 166 residues: Lymphocyte antigen 6G6e (166 aa).

The first 18 residues, 1–18 (MGPSSAFLGVLFLSGTLG), serve as a signal peptide directing secretion. The region spanning 28–151 (LRCYTCSFAK…PPPNLPLMTL (124 aa)) is the UPAR/Ly6 domain. 4 disulfides stabilise this stretch: C30–C52, C33–C39, C110–C129, and C130–C135.

Interacts with CHRNA4. Post-translationally, O-glycosylated. Contains sialic acid residues.

Its subcellular location is the cell surface. It is found in the cell membrane. It localises to the cell projection. In terms of biological role, believed to act as a modulator of nicotinic acetylcholine receptors (nAChRs) activity. In vitro potentiates alpha-3:beta-4-containing nAChRs maximum response by increasing peak current and slowing down receptor desensitization; the activity is dependent on its cell surface localization. This chain is Lymphocyte antigen 6G6e (Ly6g6e), found in Mus musculus (Mouse).